Here is a 488-residue protein sequence, read N- to C-terminus: Catalase (488 aa).

Positions 1–26 are disordered; it reads MTDRKNLTTNQGVPVGDNQNSMTAGR. Polar residues predominate over residues 7 to 23; the sequence is LTTNQGVPVGDNQNSMT. Catalysis depends on residues H55 and N128. Y338 contacts heme.

This sequence belongs to the catalase family. It depends on heme as a cofactor.

It is found in the cytoplasm. The catalysed reaction is 2 H2O2 = O2 + 2 H2O. Decomposes hydrogen peroxide into water and oxygen; serves to protect cells from the toxic effects of hydrogen peroxide. The chain is Catalase (kat) from Listeria monocytogenes serovar 1/2a (strain ATCC BAA-679 / EGD-e).